The following is a 527-amino-acid chain: Phosphoenolpyruvate carboxykinase (ATP) (527 aa).

Residues R54, Y190, and K196 each contribute to the substrate site. ATP contacts are provided by residues K196, H215, and 231-239 (GLSGTGKTT). Mn(2+) contacts are provided by K196 and H215. Position 252 (D252) interacts with Mn(2+). ATP-binding positions include E280, R317, 436 to 437 (RI), and T442. R317 serves as a coordination point for substrate.

This sequence belongs to the phosphoenolpyruvate carboxykinase (ATP) family. The cofactor is Mn(2+).

The protein localises to the cytoplasm. The enzyme catalyses oxaloacetate + ATP = phosphoenolpyruvate + ADP + CO2. It functions in the pathway carbohydrate biosynthesis; gluconeogenesis. In terms of biological role, involved in the gluconeogenesis. Catalyzes the conversion of oxaloacetate (OAA) to phosphoenolpyruvate (PEP) through direct phosphoryl transfer between the nucleoside triphosphate and OAA. The protein is Phosphoenolpyruvate carboxykinase (ATP) of Oceanobacillus iheyensis (strain DSM 14371 / CIP 107618 / JCM 11309 / KCTC 3954 / HTE831).